Reading from the N-terminus, the 314-residue chain is Pantothenate synthetase (314 aa).

Met-43–His-50 contacts ATP. The active-site Proton donor is His-50. A (R)-pantoate-binding site is contributed by Gln-75. Gln-75 contacts beta-alanine. The disordered stretch occupies residues Met-112–Glu-131. ATP is bound at residue Gly-161–Asp-164. Gln-167 lines the (R)-pantoate pocket. Residues Val-190 and Leu-198–Arg-201 contribute to the ATP site.

The protein belongs to the pantothenate synthetase family. Homodimer.

Its subcellular location is the cytoplasm. It carries out the reaction (R)-pantoate + beta-alanine + ATP = (R)-pantothenate + AMP + diphosphate + H(+). It functions in the pathway cofactor biosynthesis; (R)-pantothenate biosynthesis; (R)-pantothenate from (R)-pantoate and beta-alanine: step 1/1. In terms of biological role, catalyzes the condensation of pantoate with beta-alanine in an ATP-dependent reaction via a pantoyl-adenylate intermediate. The chain is Pantothenate synthetase from Mycolicibacterium smegmatis (strain ATCC 700084 / mc(2)155) (Mycobacterium smegmatis).